Reading from the N-terminus, the 226-residue chain is Large ribosomal subunit protein uL1 (226 aa).

It belongs to the universal ribosomal protein uL1 family. In terms of assembly, part of the 50S ribosomal subunit.

In terms of biological role, binds directly to 23S rRNA. Probably involved in E site tRNA release. Protein L1 is also a translational repressor protein, it controls the translation of its operon by binding to its mRNA. The sequence is that of Large ribosomal subunit protein uL1 from Korarchaeum cryptofilum (strain OPF8).